We begin with the raw amino-acid sequence, 176 residues long: NAD(P)H-quinone oxidoreductase subunit 6, chloroplastic (176 aa).

5 helical membrane passes run 10-30 (ILLV…ILLT), 32-52 (TIYS…FYIL), 61-81 (AQLL…VMFM), 92-112 (IWTV…FSLI), and 152-172 (FILP…GAIA).

It belongs to the complex I subunit 6 family. In terms of assembly, NDH is composed of at least 16 different subunits, 5 of which are encoded in the nucleus.

The protein resides in the plastid. It is found in the chloroplast thylakoid membrane. It catalyses the reaction a plastoquinone + NADH + (n+1) H(+)(in) = a plastoquinol + NAD(+) + n H(+)(out). The catalysed reaction is a plastoquinone + NADPH + (n+1) H(+)(in) = a plastoquinol + NADP(+) + n H(+)(out). Its function is as follows. NDH shuttles electrons from NAD(P)H:plastoquinone, via FMN and iron-sulfur (Fe-S) centers, to quinones in the photosynthetic chain and possibly in a chloroplast respiratory chain. The immediate electron acceptor for the enzyme in this species is believed to be plastoquinone. Couples the redox reaction to proton translocation, and thus conserves the redox energy in a proton gradient. This is NAD(P)H-quinone oxidoreductase subunit 6, chloroplastic (ndhG) from Piper cenocladum (Ant piper).